Here is a 205-residue protein sequence, read N- to C-terminus: MQEKKEEDLQQALNKVSEVGIDEVGKGAIFGPVFAAAVVLTEKNKFILKQFGVTDSKKLTPKKRKLLLPKILLLSSDYGIGQSSAREIDKLGIRVATELSMIRALRKLKEKPSELIIDGPLLLRPWNGIQKNIVSGDSKFISIASASIVAKVSRDNLMERLEKNYSGYLIFKNKGYGTREHLSLIKKNGITELHRKSFLKKSKLI.

The 190-residue stretch at 16–205 (VSEVGIDEVG…KSFLKKSKLI (190 aa)) folds into the RNase H type-2 domain. The a divalent metal cation site is built by Asp22, Glu23, and Asp118.

It belongs to the RNase HII family. Mn(2+) is required as a cofactor. It depends on Mg(2+) as a cofactor.

It localises to the cytoplasm. It catalyses the reaction Endonucleolytic cleavage to 5'-phosphomonoester.. Its function is as follows. Endonuclease that specifically degrades the RNA of RNA-DNA hybrids. The polypeptide is Ribonuclease HII (Prochlorococcus marinus (strain AS9601)).